A 105-amino-acid chain; its full sequence is Large ribosomal subunit protein uL24 (105 aa).

Belongs to the universal ribosomal protein uL24 family. In terms of assembly, part of the 50S ribosomal subunit.

One of two assembly initiator proteins, it binds directly to the 5'-end of the 23S rRNA, where it nucleates assembly of the 50S subunit. Functionally, one of the proteins that surrounds the polypeptide exit tunnel on the outside of the subunit. In Xylella fastidiosa (strain M23), this protein is Large ribosomal subunit protein uL24.